Consider the following 487-residue polypeptide: Melanopsin (487 aa).

The segment at 1-37 (MNPPSGPRTQEPSCVATPASPSRWDGYRSSTSSLDQP) is disordered. Topologically, residues 1–67 (MNPPSGPRTQ…VDVPDHAHYT (67 aa)) are extracellular. Residues 68–88 (LGTVILLVGLTGILGNLMVIY) form a helical membrane-spanning segment. The Cytoplasmic segment spans residues 89–102 (TFCRSRGLRTPANM). The chain crosses the membrane as a helical span at residues 103–123 (FIINLAVSDFFMSFTQAPVFF). Topologically, residues 124–139 (ASSLHKRWLFGEAGCE) are extracellular. C138 and C216 form a disulfide bridge. Residues 140–160 (FYAFCGALFGITSMITLMAIA) traverse the membrane as a helical segment. Topologically, residues 161-183 (LDRYLVITHPLATIGVVSKRRAA) are cytoplasmic. The chain crosses the membrane as a helical span at residues 184-204 (LVLLGVWLYALAWSLPPFFGW). The Extracellular segment spans residues 205-233 (SAYVPEGLLTSCSWDYMSFTPSVRAYTML). Residues 234–254 (LFCFVFFLPLLVIVYCYIFIF) traverse the membrane as a helical segment. At 255 to 291 (RAIRETGQALQTFRACEGGGRSPRQRQRLQREWKMAK) the chain is on the cytoplasmic side. Residues 292–312 (IELLVILLFVLSWAPYSIVAL) form a helical membrane-spanning segment. Over 313-327 (MAFAGYAHVLTPYMN) the chain is Extracellular. The helical transmembrane segment at 328-348 (SVPAVIAKASAIHNPIIYAIT) threads the bilayer. K335 carries the post-translational modification N6-(retinylidene)lysine. Topologically, residues 349-487 (HPKYRMAIAQ…LPLHPGWAFH (139 aa)) are cytoplasmic. Residues 436-459 (CSQGLEDREAKAPVRPQGREAETP) are disordered. A compositionally biased stretch (basic and acidic residues) spans 440 to 457 (LEDREAKAPVRPQGREAE).

It belongs to the G-protein coupled receptor 1 family. Opsin subfamily. Eye. Expression is restricted within the ganglion cell layer.

It localises to the cell membrane. It is found in the cell projection. The protein localises to the axon. The protein resides in the dendrite. Its subcellular location is the perikaryon. Photoreceptor that binds cis-retinaldehydes. Contributes to pupillar reflex, photoentrainment and other non-image forming responses to light. May be involved in the optokinetic visual tracking response. May be involved in the regulation of retinal hyaloid vessel growth and regression. This Felis catus (Cat) protein is Melanopsin (OPN4).